Here is a 331-residue protein sequence, read N- to C-terminus: 6-phosphogluconolactonase (331 aa).

Belongs to the cycloisomerase 2 family.

It catalyses the reaction 6-phospho-D-glucono-1,5-lactone + H2O = 6-phospho-D-gluconate + H(+). It participates in carbohydrate degradation; pentose phosphate pathway; D-ribulose 5-phosphate from D-glucose 6-phosphate (oxidative stage): step 2/3. Catalyzes the hydrolysis of 6-phosphogluconolactone to 6-phosphogluconate. This chain is 6-phosphogluconolactonase, found in Salmonella paratyphi A (strain ATCC 9150 / SARB42).